The primary structure comprises 304 residues: Ribonuclease Z (304 aa).

Histidine 63, histidine 65, aspartate 67, histidine 68, histidine 141, aspartate 208, and histidine 266 together coordinate Zn(2+). Residue aspartate 67 is the Proton acceptor of the active site.

Belongs to the RNase Z family. Homodimer. Zn(2+) is required as a cofactor.

The enzyme catalyses Endonucleolytic cleavage of RNA, removing extra 3' nucleotides from tRNA precursor, generating 3' termini of tRNAs. A 3'-hydroxy group is left at the tRNA terminus and a 5'-phosphoryl group is left at the trailer molecule.. In terms of biological role, zinc phosphodiesterase, which displays some tRNA 3'-processing endonuclease activity. Probably involved in tRNA maturation, by removing a 3'-trailer from precursor tRNA. The protein is Ribonuclease Z of Chlamydia muridarum (strain MoPn / Nigg).